Reading from the N-terminus, the 148-residue chain is MKVIFTQDVKGKGKKGEIKDVPVGYANNFLIKNNYAVEATPGNLKQLEQQNKRAEADRQKEIDDAKALKSKLEEIEVEVSAKTGEGGKLFGSVSTKQIAEALKTQHDIKIDKRKMDLPQGIHALGYTNVPVKLDKEVEGTIRVHTVEK.

The protein belongs to the bacterial ribosomal protein bL9 family.

In terms of biological role, binds to the 23S rRNA. The protein is Large ribosomal subunit protein bL9 of Staphylococcus haemolyticus (strain JCSC1435).